The sequence spans 122 residues: Anti-sigma-F factor antagonist RsfB (122 aa).

The STAS domain maps to 7-115; sequence ITVTVADHNG…STLHDALTGV (109 aa). Residue Ser-61 is modified to Phosphoserine.

Belongs to the anti-sigma-factor antagonist family. As to quaternary structure, interacts with anti-sigma-F factor RsbW (UsfX). Its phosphorylation may prevent this interaction. Post-translationally, putative phosphorylation on Ser-61 may prevent interaction with RsbW.

Its function is as follows. Positive regulator of sigma-F (SigF) activity. Binds to anti-sigma-F factor RsbW (UsfX) preventing its binding to SigF, thus activating transcription. This is Anti-sigma-F factor antagonist RsfB (rsfB) from Mycobacterium tuberculosis (strain CDC 1551 / Oshkosh).